Here is a 580-residue protein sequence, read N- to C-terminus: Arginine--tRNA ligase (580 aa).

The short motif at 131 to 141 (ANPTGPMHVGH) is the 'HIGH' region element.

The protein belongs to the class-I aminoacyl-tRNA synthetase family. In terms of assembly, monomer.

It localises to the cytoplasm. It carries out the reaction tRNA(Arg) + L-arginine + ATP = L-arginyl-tRNA(Arg) + AMP + diphosphate. The protein is Arginine--tRNA ligase of Cereibacter sphaeroides (strain KD131 / KCTC 12085) (Rhodobacter sphaeroides).